Here is a 241-residue protein sequence, read N- to C-terminus: Ribonuclease PH (241 aa).

Residues Arg-89 and Gly-127–Arg-129 each bind phosphate.

Belongs to the RNase PH family. In terms of assembly, homohexameric ring arranged as a trimer of dimers.

It catalyses the reaction tRNA(n+1) + phosphate = tRNA(n) + a ribonucleoside 5'-diphosphate. Its function is as follows. Phosphorolytic 3'-5' exoribonuclease that plays an important role in tRNA 3'-end maturation. Removes nucleotide residues following the 3'-CCA terminus of tRNAs; can also add nucleotides to the ends of RNA molecules by using nucleoside diphosphates as substrates, but this may not be physiologically important. Probably plays a role in initiation of 16S rRNA degradation (leading to ribosome degradation) during starvation. In Xanthomonas campestris pv. campestris (strain 8004), this protein is Ribonuclease PH.